Consider the following 55-residue polypeptide: Large ribosomal subunit protein bL33 (55 aa).

This sequence belongs to the bacterial ribosomal protein bL33 family.

The sequence is that of Large ribosomal subunit protein bL33 from Blochmanniella pennsylvanica (strain BPEN).